Reading from the N-terminus, the 354-residue chain is Serum paraoxonase/arylesterase 2 (354 aa).

A disulfide bridge connects residues C42 and C352. Ca(2+)-binding residues include E53 and D54. Residue H114 is the Proton acceptor of the active site. Positions 116, 167, 168, and 223 each coordinate Ca(2+). N254 carries N-linked (GlcNAc...) asparagine glycosylation. D268 and N269 together coordinate Ca(2+). N-linked (GlcNAc...) asparagine glycosylation is found at N269 and N323.

This sequence belongs to the paraoxonase family. In terms of assembly, homotrimer. Ca(2+) serves as cofactor. The signal sequence is not cleaved. As to expression, widely expressed with highest expression in liver, lung, placenta, testis and heart.

The protein localises to the membrane. It catalyses the reaction a phenyl acetate + H2O = a phenol + acetate + H(+). The catalysed reaction is an N-acyl-L-homoserine lactone + H2O = an N-acyl-L-homoserine + H(+). Functionally, capable of hydrolyzing lactones and a number of aromatic carboxylic acid esters. Has antioxidant activity. Is not associated with high density lipoprotein. Prevents LDL lipid peroxidation, reverses the oxidation of mildly oxidized LDL, and inhibits the ability of MM-LDL to induce monocyte chemotaxis. This is Serum paraoxonase/arylesterase 2 (PON2) from Homo sapiens (Human).